The primary structure comprises 162 residues: Peroxiredoxin-2 (162 aa).

The Thioredoxin domain maps to 4–162 (IAVGDVLPDG…SSADDILKDL (159 aa)). The active-site Cysteine sulfenic acid (-SOH) intermediate is Cys-51.

This sequence belongs to the peroxiredoxin family. Prx5 subfamily. In terms of assembly, monomer. Homodimer. Glutathionylation of C(P) causes the dimer to dissociate. Subsequent reduction of the mixed disulfide bond leads again to dimerization.

It carries out the reaction [glutaredoxin]-dithiol + a hydroperoxide = [glutaredoxin]-disulfide + an alcohol + H2O. Thiol-specific peroxidase that catalyzes the reduction of hydrogen peroxide and organic hydroperoxides to water and alcohols, respectively. Can reduce H(2)O(2) and short chain organic, fatty acid, and phospholipid hydroperoxides. Plays a role in cell protection against oxidative stress by detoxifying peroxides. The protein is Peroxiredoxin-2 of Populus trichocarpa (Western balsam poplar).